Consider the following 282-residue polypeptide: Phosphoglucan phosphatase LSF2, chloroplastic (282 aa).

The N-terminal 61 residues, 1-61, are a transit peptide targeting the chloroplast; it reads MSVIGSKSCI…GENPGTNGVS (61 aa). Residues tyrosine 83, 153 to 156, aspartate 161, and 177 to 180 each bind substrate; these read RHMR and SLEW. In terms of domain architecture, Tyrosine-protein phosphatase spans 92-249; sequence NYTLIRDELI…TYDLAKNDPW (158 aa). Residue cysteine 193 is the Phosphocysteine intermediate of the active site. The Glucan phosphatase signature motif CXAGXGR motif lies at 193 to 199; that stretch reads CSAGLGR. Substrate contacts are provided by residues 194 to 199, glycine 230, lysine 245, glutamate 251, 259 to 263, and glutamate 268; these read SAGLGR and NAFED.

Widely expressed.

Its subcellular location is the plastid. It is found in the chloroplast. Functionally, starch-associated phosphoglucan phosphatase that selectively dephosphorylates the glucan C3 position. Probably participates in the regulation of starch degradation. In Arabidopsis thaliana (Mouse-ear cress), this protein is Phosphoglucan phosphatase LSF2, chloroplastic (LSF2).